We begin with the raw amino-acid sequence, 876 residues long: Alanine--tRNA ligase (876 aa).

An N6-acetyllysine modification is found at lysine 74. Histidine 564, histidine 568, cysteine 666, and histidine 670 together coordinate Zn(2+).

It belongs to the class-II aminoacyl-tRNA synthetase family. In terms of assembly, homotetramer. It depends on Zn(2+) as a cofactor.

Its subcellular location is the cytoplasm. It catalyses the reaction tRNA(Ala) + L-alanine + ATP = L-alanyl-tRNA(Ala) + AMP + diphosphate. Catalyzes the attachment of alanine to tRNA(Ala) in a two-step reaction: alanine is first activated by ATP to form Ala-AMP and then transferred to the acceptor end of tRNA(Ala). Also edits incorrectly charged Ser-tRNA(Ala) and Gly-tRNA(Ala) via its editing domain. This Escherichia coli O9:H4 (strain HS) protein is Alanine--tRNA ligase.